A 587-amino-acid chain; its full sequence is DELLA protein GAIP-B (587 aa).

Residues methionine 1 to glycine 23 are disordered. Residues aspartate 46 to alanine 50 carry the DELLA motif motif. Residues valine 209 to lysine 577 enclose the GRAS domain. The leucine repeat I (LRI) stretch occupies residues isoleucine 216–isoleucine 270. Residues glutamine 288–glycine 353 are VHIID. A VHIID motif is present at residues valine 319–aspartate 323. Positions aspartate 367–serine 399 are leucine repeat II (LRII). The PFYRE stretch occupies residues valine 411–asparagine 498. Positions leucine 419–leucine 423 match the LXXLL motif motif. Positions alanine 501–lysine 577 are SAW.

Belongs to the GRAS family. DELLA subfamily. Phosphorylated. In terms of processing, ubiquitinated. Upon GA application it is ubiquitinated, leading to its subsequent degradation.

It is found in the nucleus. Probable transcriptional regulator that acts as a repressor of the gibberellin (GA) signaling pathway. Probably acts by participating in large multiprotein complexes that represses transcription of GA-inducible genes. Upon GA application, it is degraded by the proteasome, allowing the GA signaling pathway. In Cucurbita maxima (Pumpkin), this protein is DELLA protein GAIP-B (GAIPB).